We begin with the raw amino-acid sequence, 317 residues long: Large ribosomal subunit protein uL10 (317 aa).

A Phosphotyrosine modification is found at Y24. T59 bears the Phosphothreonine mark. K264 participates in a covalent cross-link: Glycyl lysine isopeptide (Lys-Gly) (interchain with G-Cter in ubiquitin). The interval 294 to 317 is disordered; that stretch reads APAKVEAKEESEESDEDMGFGLFD. A Glycyl lysine isopeptide (Lys-Gly) (interchain with G-Cter in SUMO1); alternate cross-link involves residue K297. Residue K297 forms a Glycyl lysine isopeptide (Lys-Gly) (interchain with G-Cter in SUMO2); alternate linkage. The span at 302-311 shows a compositional bias: acidic residues; it reads EESEESDEDM. Residues S304 and S307 each carry the phosphoserine modification.

It belongs to the universal ribosomal protein uL10 family. P0 forms a pentameric complex by interaction with dimers of P1 and P2. Identified in a IGF2BP1-dependent mRNP granule complex containing untranslated mRNAs. Interacts with APEX1. Interacts with FMR1 isoform 6. Post-translationally, ubiquitinated at Lys-264 by RNF14 and RNF25 in response to ribosome collisions (ribosome stalling).

The protein resides in the nucleus. It is found in the cytoplasm. In terms of biological role, ribosomal protein P0 is the functional equivalent of E.coli protein L10. This chain is Large ribosomal subunit protein uL10 (RPLP0), found in Homo sapiens (Human).